A 166-amino-acid polypeptide reads, in one-letter code: Plastocyanin, chloroplastic (166 aa).

The transit peptide at 1–67 directs the protein to the chloroplast; the sequence is MASLTSAAVT…GAVLASNALA (67 aa). In terms of domain architecture, Plastocyanin-like spans 68 to 166; sequence VEVLLGGSDG…AGMAGKITVN (99 aa). Residues histidine 104, cysteine 151, histidine 154, and methionine 159 each contribute to the Cu cation site.

This sequence belongs to the plastocyanin family. Cu(2+) serves as cofactor.

Its subcellular location is the plastid. The protein resides in the chloroplast thylakoid membrane. Participates in electron transfer between P700 and the cytochrome b6-f complex in photosystem I. The sequence is that of Plastocyanin, chloroplastic (PETE) from Fritillaria agrestis (Stinkbells).